A 184-amino-acid polypeptide reads, in one-letter code: uncharacterized protein (184 aa).

This is an uncharacterized protein from Clostridium acetobutylicum (strain ATCC 824 / DSM 792 / JCM 1419 / IAM 19013 / LMG 5710 / NBRC 13948 / NRRL B-527 / VKM B-1787 / 2291 / W).